Reading from the N-terminus, the 882-residue chain is Alanine--tRNA ligase (882 aa).

H563, H567, C665, and H669 together coordinate Zn(2+).

It belongs to the class-II aminoacyl-tRNA synthetase family. The cofactor is Zn(2+).

The protein localises to the cytoplasm. It catalyses the reaction tRNA(Ala) + L-alanine + ATP = L-alanyl-tRNA(Ala) + AMP + diphosphate. Its function is as follows. Catalyzes the attachment of alanine to tRNA(Ala) in a two-step reaction: alanine is first activated by ATP to form Ala-AMP and then transferred to the acceptor end of tRNA(Ala). Also edits incorrectly charged Ser-tRNA(Ala) and Gly-tRNA(Ala) via its editing domain. This Synechococcus sp. (strain RCC307) protein is Alanine--tRNA ligase.